The chain runs to 165 residues: Nucleotide-binding protein TGRD_519 (165 aa).

Belongs to the YajQ family.

Nucleotide-binding protein. The chain is Nucleotide-binding protein TGRD_519 from Endomicrobium trichonymphae.